A 136-amino-acid chain; its full sequence is uncharacterized protein (136 aa).

Its subcellular location is the cytoplasm. The protein resides in the nucleus. This is an uncharacterized protein from Schizosaccharomyces pombe (strain 972 / ATCC 24843) (Fission yeast).